We begin with the raw amino-acid sequence, 214 residues long: ER lumen protein-retaining receptor (214 aa).

The Lumenal segment spans residues 1–4 (MVFN). A helical transmembrane segment spans residues 5–23 (LFRISADLVHLLSIYFLLT). Over 24-37 (KIISHKNCIGISLR) the chain is Cytoplasmic. A helical transmembrane segment spans residues 38–55 (SQILFFIVWVTRYLDIFY). Over 56–63 (NFYSLYNT) the chain is Lumenal. Residues 64-82 (ILKIVYLTTSAYTIYLISK) traverse the membrane as a helical segment. Over 83–98 (RFRATYDKIHDTLNVW) the chain is Cytoplasmic. The helical transmembrane segment at 99–112 (YLIVPCIVLAFIFT) threads the bilayer. At 113 to 119 (EDYSITE) the chain is on the lumenal side. Residues 120–139 (ICWTFSIFLEAVAILPQILL) form a helical membrane-spanning segment. The Cytoplasmic segment spans residues 140-151 (LRSTGEVENLNS). The chain crosses the membrane as a helical span at residues 152 to 170 (QYIFCLGLYRALYIINWIY). Topologically, residues 171–181 (RYATEQSYWSP) are lumenal. A helical transmembrane segment spans residues 182 to 202 (LTWICGSIQTLLYVEYFYYYI). Topologically, residues 203-214 (KSRVEGTKFVLP) are cytoplasmic.

The protein belongs to the ERD2 family.

It localises to the endoplasmic reticulum membrane. Functionally, required for the retention of luminal endoplasmic reticulum proteins. Determines the specificity of the luminal ER protein retention system. Also required for normal vesicular traffic through the Golgi. This Entamoeba histolytica (strain ATCC 30459 / HM-1:IMSS / ABRM) protein is ER lumen protein-retaining receptor.